A 1381-amino-acid chain; its full sequence is Serine-aspartate repeat-containing protein D (1381 aa).

A signal peptide spans 1 to 35 (MLNRENKTAITRKGMVSNRLNKFSIRKYTVGTASI). The YSIRK-G/S signaling motif motif lies at 23-34 (FSIRKYTVGTAS). Residues 36–568 (LVGTTLIFGL…NNQSGGAGQE (533 aa)) are ligand binding A region. Positions 54–185 (ESTNKELNEA…NKKVDAKTES (132 aa)) are disordered. Polar residues-rich tracts occupy residues 62-71 (EATTSASDNQ) and 94-108 (EMVS…SNGN). Positions 130-145 (KSDEQASPKSTNEDLN) are enriched in basic and acidic residues. Composition is skewed to polar residues over residues 146 to 155 (TKQTISNQEA) and 163 to 173 (NKSVVNVQPTN). Residues 174–183 (EENKKVDAKT) are compositionally biased toward basic and acidic residues. CNA-B domains follow at residues 569-680 (VYKI…IYKP), 681-791 (KYNL…YKTP), 792-901 (KYNL…FYKP), 902-1012 (TYNL…YKTP), and 1013-1123 (KYSL…EEET). Disordered regions lie at residues 857-883 (ETPS…TSTT), 972-992 (YTPT…GLTT), and 1078-1357 (EKPA…SNNA). Composition is skewed to polar residues over residues 860–869 (SGYTPTQVGS) and 972–981 (YTPTSVTSGN). 4 stretches are compositionally biased toward acidic residues: residues 1091–1101 (TEDDKDADGGE), 1118–1134 (YYEE…DSDS), 1142–1164 (SDSD…DSDS), and 1172–1320 (SDSD…DSDS). An LPXTG sorting signal motif is present at residues 1344-1348 (LPETG). T1347 bears the Pentaglycyl murein peptidoglycan amidated threonine mark. A propeptide spans 1348-1381 (GNENSGSNNATLFGGLFAALGSLLLFGRRKKQNK) (removed by sortase).

Belongs to the serine-aspartate repeat-containing protein (SDr) family. As to quaternary structure, interacts with host DSG1; this interaction increases S.aureus adherence to keratinocytes.

It is found in the secreted. It localises to the cell wall. Functionally, cell surface-associated calcium-binding protein which plays an important role in adhesion and pathogenesis. Mediates interactions with components of the extracellular matrix such as host DSG1 to promote bacterial adhesion to host cells. Contributes to the resistance to killing by innate immune components such as neutrophils present in blood and thus attenuates bacterial clearance. This chain is Serine-aspartate repeat-containing protein D (sdrD), found in Staphylococcus aureus (strain USA300).